Consider the following 182-residue polypeptide: ATP-dependent protease subunit HslV (182 aa).

T12 is an active-site residue. Na(+)-binding residues include A167, C170, and T173.

The protein belongs to the peptidase T1B family. HslV subfamily. A double ring-shaped homohexamer of HslV is capped on each side by a ring-shaped HslU homohexamer. The assembly of the HslU/HslV complex is dependent on binding of ATP.

It is found in the cytoplasm. The enzyme catalyses ATP-dependent cleavage of peptide bonds with broad specificity.. With respect to regulation, allosterically activated by HslU binding. Functionally, protease subunit of a proteasome-like degradation complex believed to be a general protein degrading machinery. The polypeptide is ATP-dependent protease subunit HslV (Chlorobium phaeovibrioides (strain DSM 265 / 1930) (Prosthecochloris vibrioformis (strain DSM 265))).